Reading from the N-terminus, the 329-residue chain is DNA-directed RNA polymerase subunit alpha (329 aa).

Residues 1-231 (MQTTLLKPKT…EQLAVFAQLE (231 aa)) are alpha N-terminal domain (alpha-NTD). The interval 249 to 329 (FDPILLRPVD…SWPPAGLDKR (81 aa)) is alpha C-terminal domain (alpha-CTD).

This sequence belongs to the RNA polymerase alpha chain family. As to quaternary structure, homodimer. The RNAP catalytic core consists of 2 alpha, 1 beta, 1 beta' and 1 omega subunit. When a sigma factor is associated with the core the holoenzyme is formed, which can initiate transcription.

The enzyme catalyses RNA(n) + a ribonucleoside 5'-triphosphate = RNA(n+1) + diphosphate. In terms of biological role, DNA-dependent RNA polymerase catalyzes the transcription of DNA into RNA using the four ribonucleoside triphosphates as substrates. In Variovorax paradoxus (strain S110), this protein is DNA-directed RNA polymerase subunit alpha.